A 352-amino-acid chain; its full sequence is tRNA uridine(34) hydroxylase (352 aa).

In terms of domain architecture, Rhodanese spans 144–238 (SDPDVILIDT…YLEEVPASDS (95 aa)). Residue C198 is the Cysteine persulfide intermediate of the active site.

This sequence belongs to the TrhO family.

The catalysed reaction is uridine(34) in tRNA + AH2 + O2 = 5-hydroxyuridine(34) in tRNA + A + H2O. Functionally, catalyzes oxygen-dependent 5-hydroxyuridine (ho5U) modification at position 34 in tRNAs. The chain is tRNA uridine(34) hydroxylase from Psychrobacter arcticus (strain DSM 17307 / VKM B-2377 / 273-4).